Consider the following 196-residue polypeptide: ATP-dependent Clp protease proteolytic subunit (196 aa).

The Nucleophile role is filled by serine 101. The active site involves histidine 126.

It belongs to the peptidase S14 family. As to quaternary structure, component of the chloroplastic Clp protease core complex.

Its subcellular location is the plastid. It is found in the chloroplast stroma. It carries out the reaction Hydrolysis of proteins to small peptides in the presence of ATP and magnesium. alpha-casein is the usual test substrate. In the absence of ATP, only oligopeptides shorter than five residues are hydrolyzed (such as succinyl-Leu-Tyr-|-NHMec, and Leu-Tyr-Leu-|-Tyr-Trp, in which cleavage of the -Tyr-|-Leu- and -Tyr-|-Trp bonds also occurs).. Its function is as follows. Cleaves peptides in various proteins in a process that requires ATP hydrolysis. Has a chymotrypsin-like activity. Plays a major role in the degradation of misfolded proteins. In Citrus sinensis (Sweet orange), this protein is ATP-dependent Clp protease proteolytic subunit.